We begin with the raw amino-acid sequence, 377 residues long: Succinyl-diaminopimelate desuccinylase (377 aa).

Histidine 66 serves as a coordination point for Zn(2+). The active site involves aspartate 68. Residue aspartate 99 coordinates Zn(2+). Glutamate 133 acts as the Proton acceptor in catalysis. 3 residues coordinate Zn(2+): glutamate 134, glutamate 162, and histidine 348.

This sequence belongs to the peptidase M20A family. DapE subfamily. As to quaternary structure, homodimer. The cofactor is Zn(2+). Requires Co(2+) as cofactor.

It catalyses the reaction N-succinyl-(2S,6S)-2,6-diaminopimelate + H2O = (2S,6S)-2,6-diaminopimelate + succinate. It functions in the pathway amino-acid biosynthesis; L-lysine biosynthesis via DAP pathway; LL-2,6-diaminopimelate from (S)-tetrahydrodipicolinate (succinylase route): step 3/3. Its function is as follows. Catalyzes the hydrolysis of N-succinyl-L,L-diaminopimelic acid (SDAP), forming succinate and LL-2,6-diaminopimelate (DAP), an intermediate involved in the bacterial biosynthesis of lysine and meso-diaminopimelic acid, an essential component of bacterial cell walls. The polypeptide is Succinyl-diaminopimelate desuccinylase (Histophilus somni (strain 129Pt) (Haemophilus somnus)).